The following is a 213-amino-acid chain: Glycerol-3-phosphate acyltransferase (213 aa).

6 helical membrane-spanning segments follow: residues 2-22, 52-74, 81-100, 112-132, 143-163, and 164-184; these read ITIV…GLWI, AGMA…PIIF, PLIF…FAGF, VIFG…FGAL, VTAS…GFIL, and SNYD…IIIR.

The protein belongs to the PlsY family. Probably interacts with PlsX.

The protein resides in the cell membrane. The enzyme catalyses an acyl phosphate + sn-glycerol 3-phosphate = a 1-acyl-sn-glycero-3-phosphate + phosphate. It participates in lipid metabolism; phospholipid metabolism. Its function is as follows. Catalyzes the transfer of an acyl group from acyl-phosphate (acyl-PO(4)) to glycerol-3-phosphate (G3P) to form lysophosphatidic acid (LPA). This enzyme utilizes acyl-phosphate as fatty acyl donor, but not acyl-CoA or acyl-ACP. The sequence is that of Glycerol-3-phosphate acyltransferase from Streptococcus pneumoniae (strain Hungary19A-6).